We begin with the raw amino-acid sequence, 204 residues long: CASP-like protein 2U2 (204 aa).

Over 1–36 (MGVLGGDAHVPIGSQVSPGSVVVTNNESFGHRKLLK) the chain is Cytoplasmic. The chain crosses the membrane as a helical span at residues 37 to 57 (GVDFLVRIKAFAFCLAVIVLL). At 58 to 84 (KNNVQTTVIAPGIVLQAKYNNTKAPVS) the chain is on the extracellular side. Asn77 carries N-linked (GlcNAc...) asparagine glycosylation. Residues 85-105 (LLVLASICCGYAFLQAVVSLL) traverse the membrane as a helical segment. Residues 106–117 (SFIRDKRVLNNT) lie on the Cytoplasmic side of the membrane. A helical membrane pass occupies residues 118–138 (VLAWLTFLLDQVLTYLLLGSA). Residues 139-170 (AATAEAAYIAKRGEDKVQWKAVCGPFKRFCDH) are Extracellular-facing. Residues 171-191 (FAATVFLSFIAVIAFAVSAAI) traverse the membrane as a helical segment. The Cytoplasmic portion of the chain corresponds to 192 to 204 (SAYYLFRKSKGFK).

This sequence belongs to the Casparian strip membrane proteins (CASP) family. In terms of assembly, homodimer and heterodimers.

Its subcellular location is the cell membrane. This chain is CASP-like protein 2U2, found in Selaginella moellendorffii (Spikemoss).